The primary structure comprises 528 residues: GMP synthase [glutamine-hydrolyzing] (528 aa).

The 192-residue stretch at 13–204 folds into the Glutamine amidotransferase type-1 domain; that stretch reads AIVILDFGSQ…VYDICSCEPD (192 aa). The active-site Nucleophile is the cysteine 90. Catalysis depends on residues histidine 178 and glutamate 180. One can recognise a GMPS ATP-PPase domain in the interval 205-403; that stretch reads WTTNLFIDEA…LGLPDEIVRR (199 aa). Residue 232–238 coordinates ATP; it reads SGGVDSS.

In terms of assembly, homodimer.

It carries out the reaction XMP + L-glutamine + ATP + H2O = GMP + L-glutamate + AMP + diphosphate + 2 H(+). The protein operates within purine metabolism; GMP biosynthesis; GMP from XMP (L-Gln route): step 1/1. In terms of biological role, catalyzes the synthesis of GMP from XMP. This Prochlorococcus marinus (strain NATL1A) protein is GMP synthase [glutamine-hydrolyzing].